Consider the following 195-residue polypeptide: Interferon tau-1 (195 aa).

Residues 1–23 (MAFVLSLLMALVLVSYGPGGSLG) form the signal peptide. 2 disulfide bridges follow: C24–C122 and C52–C162.

The protein belongs to the alpha/beta interferon family. IFN-alphaII subfamily. As to expression, constitutively and exclusively expressed in the mononuclear cells of the extraembryonic trophectoderm.

The protein resides in the secreted. Functionally, paracrine hormone primarily responsible for maternal recognition of pregnancy. Interacts with endometrial receptors, probably type I interferon receptors, and blocks estrogen receptor expression, preventing the estrogen-induced increase in oxytocin receptor expression in the endometrium. This results in the suppression of the pulsatile endometrial release of the luteolytic hormone prostaglandin F2-alpha, hindering the regression of the corpus luteum (luteolysis) and therefore a return to ovarian cyclicity. This, and a possible direct effect of IFN-tau on prostaglandin synthesis, leads in turn to continued ovarian progesterone secretion, which stimulates the secretion by the endometrium of the nutrients required for the growth of the conceptus. In summary, displays particularly high antiviral and antiproliferative potency concurrently with particular weak cytotoxicity, high antiluteolytic activity and immunomodulatory properties. In contrast with other IFNs, IFN-tau is not virally inducible. This chain is Interferon tau-1 (IFNT1), found in Ovis aries (Sheep).